Reading from the N-terminus, the 465-residue chain is Protein hedgehog (465 aa).

Cysteine 79 is lipidated: N-palmitoyl cysteine. Residues glutamate 143, glutamate 144, aspartate 149, threonine 179, glutamate 180, aspartate 183, and aspartate 185 each coordinate Ca(2+). Glycine 251 carries the Cholesterol glycine ester lipid modification.

Belongs to the hedgehog family. Interacts with shf. In terms of processing, the C-terminal part of the hedgehog protein precursor displays an autoproteolysis activity that results in the cleavage of the full-length protein into two parts (N-product and C-product). In addition, the C-terminal part displays a cholesterol transferase activity that results by the covalent attachment of a cholesterol moiety to the C-terminal of the newly generated N-product. The N-product is the active species in both local and long-range signaling, whereas the C-product has no signaling activity. Cholesterylation is required for N-product targeting to lipid rafts and multimerization. Post-translationally, N-palmitoylation by Rasp of the hedgehog N-product, within the secretory pathway, is required for the embryonic and larval patterning activities of the hedgehog signal.

The protein localises to the nucleus. Its subcellular location is the cytoplasm. It localises to the cell membrane. It catalyses the reaction glycyl-L-cysteinyl-[protein] + cholesterol + H(+) = [protein]-C-terminal glycyl cholesterol ester + N-terminal L-cysteinyl-[protein]. In terms of biological role, the C-terminal part of the hedgehog protein precursor displays an autoproteolysis activity that results in the cleavage of the full-length protein into two parts (N-product and C-product). In addition, the C-terminal part displays a cholesterol transferase activity that results by the covalent attachment of a cholesterol moiety to the C-terminal of the newly generated N-product. Once cleaved, the C-product has no signaling activity and diffuses from the cell. Its function is as follows. The dually lipidated hedgehog protein N-product is a morphogen which is essential for a variety of patterning events during development. Establishes the anterior-posterior axis of the embryonic segments and patterns the larval imaginal disks. Binds to the patched (ptc) receptor, which functions in association with smoothened (smo), to activate the transcription of target genes wingless (wg), decapentaplegic (dpp) and ptc. In the absence of hh, ptc represses the constitutive signaling activity of smo through fused (fu). Essential component of a signaling pathway which regulates the Duox-dependent gut immune response to bacterial uracil; required to activate Cad99C-dependent endosome formation, norpA-dependent Ca2+ mobilization and p38 MAPK, which are essential steps in the Duox-dependent production of reactive oxygen species (ROS) in response to intestinal bacterial infection. During photoreceptor differentiation, it up-regulates transcription of Ubr3, which in turn promotes the hh-signaling pathway by mediating the ubiquitination and degradation of cos. This chain is Protein hedgehog, found in Drosophila erecta (Fruit fly).